The following is a 278-amino-acid chain: Pantothenate synthetase (278 aa).

Position 26–33 (methionine 26–histidine 33) interacts with ATP. The Proton donor role is filled by histidine 33. Residue glutamine 57 coordinates (R)-pantoate. Position 57 (glutamine 57) interacts with beta-alanine. ATP is bound at residue glycine 144–aspartate 147. A (R)-pantoate-binding site is contributed by glutamine 150. ATP contacts are provided by residues glycine 173 and leucine 181–arginine 184.

The protein belongs to the pantothenate synthetase family. In terms of assembly, homodimer.

Its subcellular location is the cytoplasm. It catalyses the reaction (R)-pantoate + beta-alanine + ATP = (R)-pantothenate + AMP + diphosphate + H(+). It functions in the pathway cofactor biosynthesis; (R)-pantothenate biosynthesis; (R)-pantothenate from (R)-pantoate and beta-alanine: step 1/1. Functionally, catalyzes the condensation of pantoate with beta-alanine in an ATP-dependent reaction via a pantoyl-adenylate intermediate. This chain is Pantothenate synthetase, found in Neisseria meningitidis serogroup B (strain ATCC BAA-335 / MC58).